The sequence spans 394 residues: Argininosuccinate synthase (394 aa).

Residues 7–15 (AYSGGLDTS) and Ala35 each bind ATP. Tyr85 is a binding site for L-citrulline. Residue Gly115 participates in ATP binding. L-aspartate-binding residues include Thr117, Asn121, and Asp122. An L-citrulline-binding site is contributed by Asn121. L-citrulline contacts are provided by Arg125, Ser174, Ser183, Glu258, and Tyr270.

This sequence belongs to the argininosuccinate synthase family. Type 1 subfamily. Homotetramer.

It is found in the cytoplasm. It carries out the reaction L-citrulline + L-aspartate + ATP = 2-(N(omega)-L-arginino)succinate + AMP + diphosphate + H(+). It functions in the pathway amino-acid biosynthesis; L-arginine biosynthesis; L-arginine from L-ornithine and carbamoyl phosphate: step 2/3. The chain is Argininosuccinate synthase from Methanopyrus kandleri (strain AV19 / DSM 6324 / JCM 9639 / NBRC 100938).